The primary structure comprises 128 residues: Small ribosomal subunit protein uS12 (128 aa).

The interval 1–30 is disordered; the sequence is MPTINQLIRKGREPKERKSKSPALMGNPQK. A 3-methylthioaspartic acid modification is found at D89. Positions 106–128 are disordered; the sequence is GVEGRKQGRSKYGTKRPKEGGKK.

This sequence belongs to the universal ribosomal protein uS12 family. Part of the 30S ribosomal subunit. Contacts proteins S8 and S17. May interact with IF1 in the 30S initiation complex.

In terms of biological role, with S4 and S5 plays an important role in translational accuracy. Interacts with and stabilizes bases of the 16S rRNA that are involved in tRNA selection in the A site and with the mRNA backbone. Located at the interface of the 30S and 50S subunits, it traverses the body of the 30S subunit contacting proteins on the other side and probably holding the rRNA structure together. The combined cluster of proteins S8, S12 and S17 appears to hold together the shoulder and platform of the 30S subunit. The polypeptide is Small ribosomal subunit protein uS12 (Dictyoglomus thermophilum (strain ATCC 35947 / DSM 3960 / H-6-12)).